Reading from the N-terminus, the 947-residue chain is Bifunctional glutamine synthetase adenylyltransferase/adenylyl-removing enzyme (947 aa).

Positions 1–440 are adenylyl removase; it reads MTPLSSPLSQ…VFNELIGDDE (440 aa). An adenylyl transferase region spans residues 450-947; it reads SEPWREVWQD…ASWRKWLVAV (498 aa).

It belongs to the GlnE family. Mg(2+) is required as a cofactor.

It carries out the reaction [glutamine synthetase]-O(4)-(5'-adenylyl)-L-tyrosine + phosphate = [glutamine synthetase]-L-tyrosine + ADP. The catalysed reaction is [glutamine synthetase]-L-tyrosine + ATP = [glutamine synthetase]-O(4)-(5'-adenylyl)-L-tyrosine + diphosphate. Functionally, involved in the regulation of glutamine synthetase GlnA, a key enzyme in the process to assimilate ammonia. When cellular nitrogen levels are high, the C-terminal adenylyl transferase (AT) inactivates GlnA by covalent transfer of an adenylyl group from ATP to specific tyrosine residue of GlnA, thus reducing its activity. Conversely, when nitrogen levels are low, the N-terminal adenylyl removase (AR) activates GlnA by removing the adenylyl group by phosphorolysis, increasing its activity. The regulatory region of GlnE binds the signal transduction protein PII (GlnB) which indicates the nitrogen status of the cell. The sequence is that of Bifunctional glutamine synthetase adenylyltransferase/adenylyl-removing enzyme from Salmonella typhimurium (strain LT2 / SGSC1412 / ATCC 700720).